We begin with the raw amino-acid sequence, 557 residues long: Formate--tetrahydrofolate ligase 1 (557 aa).

ATP is bound at residue 66–73; the sequence is TPAGEGKT.

Belongs to the formate--tetrahydrofolate ligase family.

It carries out the reaction (6S)-5,6,7,8-tetrahydrofolate + formate + ATP = (6R)-10-formyltetrahydrofolate + ADP + phosphate. It participates in one-carbon metabolism; tetrahydrofolate interconversion. The protein is Formate--tetrahydrofolate ligase 1 of Streptococcus sanguinis (strain SK36).